Consider the following 310-residue polypeptide: Ribosomal RNA small subunit methyltransferase H (310 aa).

Residues 35–37, Asp52, Phe79, Asp100, and Gln107 each bind S-adenosyl-L-methionine; that span reads GGH.

This sequence belongs to the methyltransferase superfamily. RsmH family.

The protein resides in the cytoplasm. The enzyme catalyses cytidine(1402) in 16S rRNA + S-adenosyl-L-methionine = N(4)-methylcytidine(1402) in 16S rRNA + S-adenosyl-L-homocysteine + H(+). Its function is as follows. Specifically methylates the N4 position of cytidine in position 1402 (C1402) of 16S rRNA. This chain is Ribosomal RNA small subunit methyltransferase H, found in Anaeromyxobacter sp. (strain K).